Reading from the N-terminus, the 243-residue chain is UPF0173 metal-dependent hydrolase Xaut_3786 (243 aa).

It belongs to the UPF0173 family.

The protein is UPF0173 metal-dependent hydrolase Xaut_3786 of Xanthobacter autotrophicus (strain ATCC BAA-1158 / Py2).